Here is a 538-residue protein sequence, read N- to C-terminus: Probable ribonuclease 3 (538 aa).

2 RNase III domains span residues I24–G149 and A238–L381. Positions L408–Y477 constitute a DRBM domain.

Belongs to the ribonuclease III family.

It carries out the reaction Endonucleolytic cleavage to 5'-phosphomonoester.. Its function is as follows. Digests double-stranded RNA. The polypeptide is Probable ribonuclease 3 (Acanthamoeba polyphaga (Amoeba)).